Consider the following 483-residue polypeptide: E3 ubiquitin-protein ligase TRIM50 (483 aa).

The RING-type zinc finger occupies 16 to 57; it reads CPICLEVFKEPLMLQCGHSYCKNCLDSLSEHLDSELRCPVCR. Residues 84 to 125 form a B box-type zinc finger; that stretch reads TEPTVCVHHRNPLSLFCEKDQEFICGLCGLLGSHQHHRVTPV. The Zn(2+) site is built by Cys89, His92, Cys111, and His117. Coiled coils occupy residues 127–169 and 203–236; these read TVYS…NESD and GLVA…GNES. Residues 275–474 form the B30.2/SPRY domain; the sequence is DIKLTVWKRL…LPMVLPPPSA (200 aa). Lys372 bears the N6-acetyllysine mark.

Belongs to the TRIM/RBCC family. As to quaternary structure, can form dimers and trimers. Interacts with several E2 ubiquitin-conjugating enzymes, including UBE2L6, UBE2E1, UBE2E3. No interaction with UBE2H. Interacts with BECN1. Interacts with SQSTM1. Interacts with NLRP3. Auto-ubiquitinated. Post-translationally, acetylated by EP300 and KAT2B. HDAC6 drives TRIM50 deacetylation. Acetylation antagonizes with TRIM50 ubiquitination.

It is found in the cytoplasm. The catalysed reaction is S-ubiquitinyl-[E2 ubiquitin-conjugating enzyme]-L-cysteine + [acceptor protein]-L-lysine = [E2 ubiquitin-conjugating enzyme]-L-cysteine + N(6)-ubiquitinyl-[acceptor protein]-L-lysine.. Its function is as follows. E3 ubiquitin-protein ligase that ubiquitinates Beclin-1/BECN1 in a 'Lys-63'-dependent manner enhancing its binding to ULK1. In turn, promotes starvation-induced autophagy activation. Also interacts with p62/SQSTM1 protein and thereby induces the formation and the autophagy clearance of aggresome-associated polyubiquitinated proteins through HDAC6 interaction. Also promotes NLRP3 inflammasome activation by directly inducing NLRP3 oligomerization independent of its E3 ligase function. The sequence is that of E3 ubiquitin-protein ligase TRIM50 (Trim50) from Rattus norvegicus (Rat).